A 467-amino-acid chain; its full sequence is Abscisic acid 8'-hydroxylase 1 (467 aa).

Residues 5–24 (ALFLTLFAGSLFLYFLRCLI) form a helical membrane-spanning segment. Cys411 contributes to the heme binding site.

Belongs to the cytochrome P450 family. Requires heme as cofactor. In terms of tissue distribution, mainly expressed in flowers, siliques, roots and stems. Lower expression in rosette leaves and dry seeds. Expressed in vascular tissues of embryo during the seed development.

The protein localises to the membrane. The enzyme catalyses 2-cis-(+)-abscisate + reduced [NADPH--hemoprotein reductase] + O2 = (+)-8'-hydroxyabscisate + oxidized [NADPH--hemoprotein reductase] + H2O + H(+). Its pathway is plant hormone degradation; abscisic acid degradation. Functionally, involved in the oxidative degradation of abscisic acid. Plays an important role in determining abscisic acid levels in dry seeds and in the control of postgermination growth. This is Abscisic acid 8'-hydroxylase 1 (CYP707A1) from Arabidopsis thaliana (Mouse-ear cress).